The following is a 123-amino-acid chain: Small ribosomal subunit protein uS12 (123 aa).

A 3-methylthioaspartic acid modification is found at Asp89.

Belongs to the universal ribosomal protein uS12 family. Part of the 30S ribosomal subunit. Contacts proteins S8 and S17. May interact with IF1 in the 30S initiation complex.

In terms of biological role, with S4 and S5 plays an important role in translational accuracy. Its function is as follows. Interacts with and stabilizes bases of the 16S rRNA that are involved in tRNA selection in the A site and with the mRNA backbone. Located at the interface of the 30S and 50S subunits, it traverses the body of the 30S subunit contacting proteins on the other side and probably holding the rRNA structure together. The combined cluster of proteins S8, S12 and S17 appears to hold together the shoulder and platform of the 30S subunit. In Granulibacter bethesdensis (strain ATCC BAA-1260 / CGDNIH1), this protein is Small ribosomal subunit protein uS12.